The sequence spans 282 residues: MATYLIGDVHGCYDELIALLQQVEFTPDTDTLWLTGDLVARGPGSLDVLRYVKSLGNSVRLVLGNHDLHLLAVFAGISRNKPKDRLTPLLEAPDADELLNWLRRQPLLQVDEEKKLVMAHAGITPQWDLQTAKECARDVEAVLSSDSYPFFLDAMYGDMPNNWSPELSGLARLRFITNAFTRMRYCFPNGQLDMYSKASPENAPAPLKPWFAIPGPVSEAYSIAFGHWASLEGKGTPEGIYALDTGCCWGGELTCLRWEDKQYFVQPSNRQMDMGEGEAVNA.

This sequence belongs to the Ap4A hydrolase family.

The enzyme catalyses P(1),P(4)-bis(5'-adenosyl) tetraphosphate + H2O = 2 ADP + 2 H(+). Its function is as follows. Hydrolyzes diadenosine 5',5'''-P1,P4-tetraphosphate to yield ADP. In Salmonella agona (strain SL483), this protein is Bis(5'-nucleosyl)-tetraphosphatase, symmetrical.